The primary structure comprises 566 residues: O-fucosyltransferase 36 (566 aa).

The span at 1–14 (MERNSSDDEEDHQH) shows a compositional bias: basic and acidic residues. Positions 1 to 37 (MERNSSDDEEDHQHLIPQNDTRIRHREDSVSSNATTI) are disordered. Residues 66–86 (YVIVFVSLIISIGLLFLLTDP) traverse the membrane as a helical; Signal-anchor for type II membrane protein segment. Residues asparagine 93, asparagine 129, asparagine 138, asparagine 179, and asparagine 190 are each glycosylated (N-linked (GlcNAc...) asparagine). Substrate-binding positions include 415–417 (HFR) and 531–532 (TF).

The protein belongs to the glycosyltransferase GT106 family.

It is found in the membrane. Its pathway is glycan metabolism. The polypeptide is O-fucosyltransferase 36 (Arabidopsis thaliana (Mouse-ear cress)).